The sequence spans 342 residues: Acetoin:2,6-dichlorophenolindophenol oxidoreductase subunit beta (342 aa).

In terms of assembly, tetramer of 2 alpha and 2 beta subunits.

Its pathway is ketone degradation; acetoin degradation. In terms of biological role, catalyzes the 2,6-dichlorophenolindophenol-dependent cleavage of acetoin into acetate and acetaldehyde. The sequence is that of Acetoin:2,6-dichlorophenolindophenol oxidoreductase subunit beta (acoB) from Bacillus subtilis (strain 168).